Here is a 31-residue protein sequence, read N- to C-terminus: Cyclotide cter-J (31 aa).

Positions 1 to 31 (GTVPCGESCVFIPCITGIAGCSCKNKVCYID) form a cross-link, cyclopeptide (Gly-Asp). 3 cysteine pairs are disulfide-bonded: Cys-5–Cys-21, Cys-9–Cys-23, and Cys-14–Cys-28.

Post-translationally, contains 3 disulfide bonds. In terms of processing, this is a cyclic peptide.

Probably participates in a plant defense mechanism. The chain is Cyclotide cter-J from Clitoria ternatea (Butterfly pea).